Reading from the N-terminus, the 185-residue chain is UPF0397 protein PAM_019 (185 aa).

5 helical membrane-spanning segments follow: residues 13-33, 42-62, 69-89, 109-129, and 143-163; these read IGLSAAIFFVLSCFASIPVGF, AFLAFIAVAFGPAVGFYVGLI, FILFGNVSWNWVLCSALIGFI, IVYFWLYQVAFNFIIWGFFAP, and VYLQSFLIVISNILAYSVVGI.

It belongs to the UPF0397 family.

It is found in the cell membrane. This Onion yellows phytoplasma (strain OY-M) protein is UPF0397 protein PAM_019.